The sequence spans 200 residues: Interleukin 17-like protein (200 aa).

The first 26 residues, 1–26 (MGNFFLFAMTLVVCSVIVLLTGVADS), serve as a signal peptide directing secretion. Asn46 carries N-linked (GlcNAc...) asparagine glycosylation. 2 disulfides stabilise this stretch: Cys122–Cys175 and Cys127–Cys177. The N-linked (GlcNAc...) asparagine glycan is linked to Asn192.

This sequence belongs to the IL-17 family. As to expression, expressed in several tissues including hemocytes, gills, mantle, adductor muscle, labial palps, digestive glands and heart with highest levels in gills and lowest levels in adductor muscle and heart.

The protein resides in the secreted. This Magallana gigas (Pacific oyster) protein is Interleukin 17-like protein.